The primary structure comprises 825 residues: MQGMASVVSCEPWALLGRGALCTKARPGGGPAAGTVVAPGSPDRGRPRSRNSLASQDQQGAVTSGTAHKALFSRDTNFLQEINRKQEAAPTGTRHKAKSQGLVTFGDVAVVFSQEEWEWLNSEQRSLYWKVMLDNYRNLASLGLCASQPDMITSLEQGRDPWMMKRKMRKGQHLDLKAMQETKEFPPKDLSEETLFLAVLRKQLLPHRPKCSMVRAAWEGGAVFTTHRGLKTNSGLARDSPAQLVSAQRSFCKSVTWENCGDRGSVGQQSVQEAQDLLPRQDSHAERVTGRTWSTKLECSTFRDQDSECTFERNEQETVTPNRAFSEGRDGMCIESGRWFHLNSSDERSHNCDSGKSFSSNPVVVKETGICSGKKLFQCNECKKTFTQSSSLTVHQRIHTGEKPYKCNQCGKAFSDGSSFARHQRCHTGKKPYECPECGKAFIQNTSLVRHWRYYHTGEKPFDCIDCGKAFSDHIGLNQHRRIHTGEKPYTCEVCHKSFRYGSSLTVHQRIHTGEKPYECEICRKAFSHHASLTQHQRVHSGEKPFKCKECGKAFRQNIHLASHWRIHTGEKPFECGECGKSFSISSQLATHQRIHTGEKPYECKVCRKAFTQKAHLAQHQKTHTGEKPYECKECGKAFSQTTHLIQHQRVHTGEKPYKCLECGKAFGDNSSCTQHRRLHTGQRPYECVECGKTFKTKSSLICHRRCHTGEKPYECSACGKAFSHRQSLSVHQRIHSGKKPYECKECRKTFIQIGHLNQHKRVHTGERTYNYKKGRRAFRQTAHFAHHQQIHSGKSPAHHSLPSTSNPVDLFSKFVWNPSSLPSS.

A disordered region spans residues 26 to 65; sequence RPGGGPAAGTVVAPGSPDRGRPRSRNSLASQDQQGAVTSG. The span at 33 to 42 shows a compositional bias: low complexity; it reads AGTVVAPGSP. Positions 51–65 are enriched in polar residues; the sequence is NSLASQDQQGAVTSG. Residues 103–174 enclose the KRAB domain; the sequence is VTFGDVAVVF…KRKMRKGQHL (72 aa). 14 consecutive C2H2-type zinc fingers follow at residues 377–399, 405–427, 433–456, 462–484, 490–512, 518–540, 546–568, 574–596, 602–624, 630–652, 658–680, 686–708, 714–736, and 742–764; these read FQCN…QRIH, YKCN…QRCH, YECP…RYYH, FDCI…RRIH, YTCE…QRIH, YECE…QRVH, FKCK…WRIH, FECG…QRIH, YECK…QKTH, YECK…QRVH, YKCL…RRLH, YECV…RRCH, YECS…QRIH, and YECK…KRVH. Residues 770 to 792 form a C2H2-type 15; degenerate zinc finger; it reads YNYKKGRRAFRQTAHFAHHQQIH.

It belongs to the krueppel C2H2-type zinc-finger protein family. Expressed predominantly in ovary.

Its subcellular location is the nucleus. Functionally, may be involved in transcriptional regulation. May have a role in embryonic development. The protein is Zinc finger protein 28 (Zfp28) of Mus musculus (Mouse).